A 260-amino-acid polypeptide reads, in one-letter code: Type III pantothenate kinase (260 aa).

An ATP-binding site is contributed by 6–13 (DSGNTNIV). 108 to 111 (GADR) contributes to the substrate binding site. D110 functions as the Proton acceptor in the catalytic mechanism. K(+) is bound at residue D130. T133 contributes to the ATP binding site. Position 185 (T185) interacts with substrate.

This sequence belongs to the type III pantothenate kinase family. In terms of assembly, homodimer. The cofactor is NH4(+). Requires K(+) as cofactor.

It localises to the cytoplasm. It carries out the reaction (R)-pantothenate + ATP = (R)-4'-phosphopantothenate + ADP + H(+). The protein operates within cofactor biosynthesis; coenzyme A biosynthesis; CoA from (R)-pantothenate: step 1/5. Catalyzes the phosphorylation of pantothenate (Pan), the first step in CoA biosynthesis. The polypeptide is Type III pantothenate kinase (Paramagnetospirillum magneticum (strain ATCC 700264 / AMB-1) (Magnetospirillum magneticum)).